The chain runs to 923 residues: Helicase POLQ-like (923 aa).

A disordered region spans residues 1 to 84 (MNRTPIRRCK…STVTPIQQKI (84 aa)). Over residues 43–55 (STSPQSPSSSTEN) the composition is skewed to low complexity. One can recognise a Helicase ATP-binding domain in the interval 178-349 (DKRLLDGENC…ALRAFVYSTN (172 aa)). 191 to 198 (LPTGAGKT) is an ATP binding site. A DEAH box motif is present at residues 295–298 (DELH). The region spanning 392 to 596 (GICQLLAKLI…CVVLKLAENI (205 aa)) is the Helicase C-terminal domain.

This sequence belongs to the helicase family. SKI2 subfamily.

Its subcellular location is the nucleus. The protein localises to the chromosome. It carries out the reaction Couples ATP hydrolysis with the unwinding of duplex DNA by translocating in the 3'-5' direction.. The enzyme catalyses ATP + H2O = ADP + phosphate + H(+). Its function is as follows. Single-stranded 3'-5' DNA helicase that plays a key role in homology-driven double-strand break (DSB) repair. Involved in different DSB repair mechanisms that are guided by annealing of extensive stretches of complementary bases at break ends, such as microhomology-mediated end-joining (MMEJ), single-strand annealing (SSA) or synthesis-dependent strand annealing (SDSA). The polypeptide is Helicase POLQ-like (Caenorhabditis elegans).